The following is an 871-amino-acid chain: Protein TIC 100 (871 aa).

Positions 1–85 are disordered; that stretch reads MANEELTESQ…NANPETNIRR (85 aa). Polar residues predominate over residues 8–20; it reads ESQQQEDPSQQLP. Low complexity predominate over residues 30 to 46; it reads SDSNSDSDASSQSSGDD. MORN repeat units lie at residues 219–239, 243–257, and 337–352; these read YEGTVWDDLAQGKGVYIAENG, YEGEWLQNDMEGHGV, and YAGQWKHSRMHGCGVY. Asn238 is modified (deamidated asparagine). Residues 587 to 647 adopt a coiled-coil conformation; that stretch reads MLDGLEKWTE…QEEEKKTEMG (61 aa). Disordered stretches follow at residues 631 to 654 and 669 to 721; these read EELKKKEQEEEKKTEMGLTEEDED and KEKI…NSPF. Basic and acidic residues predominate over residues 632 to 645; that stretch reads ELKKKEQEEEKKTE. Thr649 is subject to Phosphothreonine. The span at 669–683 shows a compositional bias: basic and acidic residues; it reads KEKIQENKQEEKYKD. The segment covering 684–704 has biased composition (acidic residues); it reads DDDEDDDDGDDDDDDDDDDDL.

In terms of assembly, part of the Tic complex. Component of the 1-MD complex, composed of TIC20-I, TIC214, TIC100 and TIC56. Interacts with the translocating preproteins. Hydrolysis of ATP is essential for the formation of this complex. The 1-MD complex interacts with TIC21. As to expression, preferentially expressed in ovules, and moderately expressed in leaves and siliques.

It is found in the plastid. The protein resides in the chloroplast inner membrane. Involved in protein precursor import into chloroplasts. May be part of an intermediate translocation complex acting as a protein-conducting channel at the inner envelope. Plays an important role during embryogenesis and chloroplast biogenesis. The polypeptide is Protein TIC 100 (Arabidopsis thaliana (Mouse-ear cress)).